The chain runs to 209 residues: MARRPQRPAPSGRAGAGRGAAGAAPPGPDARLVVLGEFGRAHGLQGEVRLKSYTAEPMAIGGYGPLLASDGRVVELTALRPAAGTPDILVARVAGVAGRSAAEGLNRLTLSVPRDRLGAPEDEDEFFTADLVGLAAVDAAGTRLGTIRAVPNYGGGDLLEIEPEGGGRPALLPFTRLFVPKVEIAAGRVTIAPPEDLFAPPGPPPEGEG.

The segment at 1 to 28 is disordered; that stretch reads MARRPQRPAPSGRAGAGRGAAGAAPPGP. The PRC barrel domain occupies 123–197; sequence EDEFFTADLV…RVTIAPPEDL (75 aa).

The protein belongs to the RimM family. Binds ribosomal protein uS19.

It localises to the cytoplasm. In terms of biological role, an accessory protein needed during the final step in the assembly of 30S ribosomal subunit, possibly for assembly of the head region. Essential for efficient processing of 16S rRNA. May be needed both before and after RbfA during the maturation of 16S rRNA. It has affinity for free ribosomal 30S subunits but not for 70S ribosomes. The protein is Ribosome maturation factor RimM of Methylobacterium sp. (strain 4-46).